Here is a 461-residue protein sequence, read N- to C-terminus: Deoxyguanosinetriphosphate triphosphohydrolase-like protein (461 aa).

The interval 22-41 (ERFLPDPPREKDNRPPFRRD) is disordered. Residues 24–41 (FLPDPPREKDNRPPFRRD) are compositionally biased toward basic and acidic residues. The HD domain occupies 72-285 (RLTHSLEVAQ…MELADDIAYG (214 aa)).

This sequence belongs to the dGTPase family. Type 2 subfamily.

In Haemophilus influenzae (strain PittGG), this protein is Deoxyguanosinetriphosphate triphosphohydrolase-like protein.